The following is a 136-amino-acid chain: Aspartate 1-decarboxylase (136 aa).

The Schiff-base intermediate with substrate; via pyruvic acid role is filled by Ser-25. Residue Ser-25 is modified to Pyruvic acid (Ser). Thr-57 provides a ligand contact to substrate. Tyr-58 functions as the Proton donor in the catalytic mechanism. Substrate is bound at residue 73-75; the sequence is GAA.

Belongs to the PanD family. Heterooctamer of four alpha and four beta subunits. Pyruvate serves as cofactor. Post-translationally, is synthesized initially as an inactive proenzyme, which is activated by self-cleavage at a specific serine bond to produce a beta-subunit with a hydroxyl group at its C-terminus and an alpha-subunit with a pyruvoyl group at its N-terminus.

Its subcellular location is the cytoplasm. It carries out the reaction L-aspartate + H(+) = beta-alanine + CO2. Its pathway is cofactor biosynthesis; (R)-pantothenate biosynthesis; beta-alanine from L-aspartate: step 1/1. Catalyzes the pyruvoyl-dependent decarboxylation of aspartate to produce beta-alanine. The polypeptide is Aspartate 1-decarboxylase (Acidothermus cellulolyticus (strain ATCC 43068 / DSM 8971 / 11B)).